The sequence spans 516 residues: Maturase K (516 aa).

It belongs to the intron maturase 2 family. MatK subfamily.

It is found in the plastid. Its subcellular location is the chloroplast. Usually encoded in the trnK tRNA gene intron. Probably assists in splicing its own and other chloroplast group II introns. The protein is Maturase K of Disporum sessile (Japanese fairy bells).